The sequence spans 186 residues: Casparian strip membrane protein 3 (186 aa).

The Cytoplasmic segment spans residues 1 to 26; the sequence is MTKSTYVELGEEKTSNQKGNMKRGVS. Residues 27–47 traverse the membrane as a helical segment; sequence ILDFILRLIAIVATLASAIAM. Over 48–74 the chain is Extracellular; that stretch reads GTTDESLPFFTQFVRFRANYDDLPTLR. The chain crosses the membrane as a helical span at residues 75–95; sequence FFVVASAIVSGYLILSLPLSI. The Cytoplasmic segment spans residues 96 to 107; it reads LHIIRSSAGMTR. The chain crosses the membrane as a helical span at residues 108 to 128; the sequence is VIFIILDTVMLGLLTAGSSAA. The Extracellular portion of the chain corresponds to 129–161; that stretch reads ASIVYLAHKGNRKANWFAFCQQYNSFCERISGS. The helical transmembrane segment at 162 to 182 threads the bilayer; that stretch reads LIGSFIAIPLFIMLILLSALV. Over 183-186 the chain is Cytoplasmic; that stretch reads LSRR.

It belongs to the Casparian strip membrane proteins (CASP) family. As to quaternary structure, homodimer and heterodimers.

The protein localises to the cell membrane. In terms of biological role, regulates membrane-cell wall junctions and localized cell wall deposition. Required for establishment of the Casparian strip membrane domain (CSD) and the subsequent formation of Casparian strips, a cell wall modification of the root endodermis that determines an apoplastic barrier between the intraorganismal apoplasm and the extraorganismal apoplasm and prevents lateral diffusion. The polypeptide is Casparian strip membrane protein 3 (Medicago truncatula (Barrel medic)).